A 115-amino-acid polypeptide reads, in one-letter code: Protein Rev (115 aa).

Residues Ser5 and Ser8 each carry the phosphoserine; by host CK2 modification. The interval Leu18 to Asn26 is homomultimerization. Positions Tyr23–Arg48 are disordered. Positions Thr34–Arg50 match the Nuclear localization signal and RNA-binding (RRE) motif. The segment covering Gln36 to Arg48 has biased composition (basic residues). Residues Leu73–Asp83 carry the Nuclear export signal and binding to XPO1 motif. The segment at Gly89–Glu115 is disordered. Phosphoserine; by host occurs at positions 91 and 98.

This sequence belongs to the HIV-1 REV protein family. As to quaternary structure, homomultimer; when bound to the RRE. Multimeric assembly is essential for activity and may involve XPO1. Binds to human KPNB1, XPO1, TNPO1, RANBP5 and IPO7. Interacts with the viral Integrase. Interacts with human KHDRBS1. Interacts with human NAP1; this interaction decreases Rev multimerization and stimulates its activity. Interacts with human DEAD-box helicases DDX3 and DDX24; these interactions may serve for viral RNA export to the cytoplasm and packaging, respectively. Interacts with human PSIP1; this interaction may inhibit HIV-1 DNA integration by promoting dissociation of the Integrase-LEDGF/p75 complex. In terms of processing, asymmetrically arginine dimethylated at one site by host PRMT6. Methylation impairs the RNA-binding activity and export of viral RNA from the nucleus to the cytoplasm. Post-translationally, phosphorylated by protein kinase CK2. Presence of, and maybe binding to the N-terminus of the regulatory beta subunit of CK2 is necessary for CK2-mediated Rev's phosphorylation.

The protein localises to the host nucleus. It localises to the host nucleolus. It is found in the host cytoplasm. Escorts unspliced or incompletely spliced viral pre-mRNAs (late transcripts) out of the nucleus of infected cells. These pre-mRNAs carry a recognition sequence called Rev responsive element (RRE) located in the env gene, that is not present in fully spliced viral mRNAs (early transcripts). This function is essential since most viral proteins are translated from unspliced or partially spliced pre-mRNAs which cannot exit the nucleus by the pathway used by fully processed cellular mRNAs. Rev itself is translated from a fully spliced mRNA that readily exits the nucleus. Rev's nuclear localization signal (NLS) binds directly to KPNB1/Importin beta-1 without previous binding to KPNA1/Importin alpha-1. KPNB1 binds to the GDP bound form of RAN (Ran-GDP) and targets Rev to the nucleus. In the nucleus, the conversion from Ran-GDP to Ran-GTP dissociates Rev from KPNB1 and allows Rev's binding to the RRE in viral pre-mRNAs. Rev multimerization on the RRE via cooperative assembly exposes its nuclear export signal (NES) to the surface. Rev can then form a complex with XPO1/CRM1 and Ran-GTP, leading to nuclear export of the complex. Conversion from Ran-GTP to Ran-GDP mediates dissociation of the Rev/RRE/XPO1/RAN complex, so that Rev can return to the nucleus for a subsequent round of export. Beside KPNB1, also seems to interact with TNPO1/Transportin-1, RANBP5/IPO5 and IPO7/RANBP7 for nuclear import. The nucleoporin-like HRB/RIP is an essential cofactor that probably indirectly interacts with Rev to release HIV RNAs from the perinuclear region to the cytoplasm. The polypeptide is Protein Rev (Human immunodeficiency virus type 1 group M subtype B (isolate MN) (HIV-1)).